The primary structure comprises 176 residues: Large ribosomal subunit protein uL10 (176 aa).

The protein belongs to the universal ribosomal protein uL10 family. Part of the ribosomal stalk of the 50S ribosomal subunit. The N-terminus interacts with L11 and the large rRNA to form the base of the stalk. The C-terminus forms an elongated spine to which L12 dimers bind in a sequential fashion forming a multimeric L10(L12)X complex.

Forms part of the ribosomal stalk, playing a central role in the interaction of the ribosome with GTP-bound translation factors. This is Large ribosomal subunit protein uL10 from Streptomyces avermitilis (strain ATCC 31267 / DSM 46492 / JCM 5070 / NBRC 14893 / NCIMB 12804 / NRRL 8165 / MA-4680).